A 452-amino-acid polypeptide reads, in one-letter code: Ribosomal protein uS12 methylthiotransferase RimO (452 aa).

An MTTase N-terminal domain is found at 5 to 116 (PTIAFSHLGC…IVDVLQRTES (112 aa)). [4Fe-4S] cluster is bound by residues Cys-14, Cys-50, Cys-79, Cys-154, Cys-158, and Cys-161. Positions 140 to 369 (TTTSAVAYLR…MATQQPIAER (230 aa)) constitute a Radical SAM core domain. Positions 372 to 438 (RAQIGRLVDV…IYDLHGEVAS (67 aa)) constitute a TRAM domain.

The protein belongs to the methylthiotransferase family. RimO subfamily. The cofactor is [4Fe-4S] cluster.

It localises to the cytoplasm. It catalyses the reaction L-aspartate(89)-[ribosomal protein uS12]-hydrogen + (sulfur carrier)-SH + AH2 + 2 S-adenosyl-L-methionine = 3-methylsulfanyl-L-aspartate(89)-[ribosomal protein uS12]-hydrogen + (sulfur carrier)-H + 5'-deoxyadenosine + L-methionine + A + S-adenosyl-L-homocysteine + 2 H(+). Functionally, catalyzes the methylthiolation of an aspartic acid residue of ribosomal protein uS12. The protein is Ribosomal protein uS12 methylthiotransferase RimO of Synechococcus sp. (strain ATCC 27144 / PCC 6301 / SAUG 1402/1) (Anacystis nidulans).